The following is a 486-amino-acid chain: Cobyric acid synthase (486 aa).

The GATase cobBQ-type domain maps to 250–438 (AFRIVVPVPP…LHGMFDTPSA (189 aa)). The active-site Nucleophile is cysteine 331. The active site involves histidine 430.

This sequence belongs to the CobB/CobQ family. CobQ subfamily.

It functions in the pathway cofactor biosynthesis; adenosylcobalamin biosynthesis. Functionally, catalyzes amidations at positions B, D, E, and G on adenosylcobyrinic A,C-diamide. NH(2) groups are provided by glutamine, and one molecule of ATP is hydrogenolyzed for each amidation. This is Cobyric acid synthase from Herminiimonas arsenicoxydans.